Reading from the N-terminus, the 59-residue chain is Photosystem II reaction center protein K (59 aa).

Positions 1–22 (MLNIFSLICLNSALYSSSFFFG) are excised as a propeptide. Residues 30 to 50 (FLSPIVDFMPVIPLFFFLLAF) form a helical membrane-spanning segment.

In terms of assembly, PSII is composed of 1 copy each of membrane proteins PsbA, PsbB, PsbC, PsbD, PsbE, PsbF, PsbH, PsbI, PsbJ, PsbK, PsbL, PsbM, PsbT, PsbX, PsbY, PsbZ, Psb30/Ycf12, at least 3 peripheral proteins of the oxygen-evolving complex and a large number of cofactors. It forms dimeric complexes. This protein, PsbL and plastoquinone-9 are found in PSII dimers but not seen in PSII monomers.

It is found in the plastid. The protein resides in the chloroplast thylakoid membrane. In terms of biological role, one of the components of the core complex of photosystem II (PSII). PSII is a light-driven water:plastoquinone oxidoreductase that uses light energy to abstract electrons from H(2)O, generating O(2) and a proton gradient subsequently used for ATP formation. It consists of a core antenna complex that captures photons, and an electron transfer chain that converts photonic excitation into a charge separation. May be involved in PSII dimerization. Its function is as follows. One of the components of the core complex of photosystem II (PSII). PSII is a light-driven water:plastoquinone oxidoreductase that uses light energy to abstract electrons from H(2)O, generating O(2) and a proton gradient subsequently used for ATP formation. It consists of a core antenna complex that captures photons, and an electron transfer chain that converts photonic excitation into a charge separation. The protein is Photosystem II reaction center protein K of Spinacia oleracea (Spinach).